Here is a 455-residue protein sequence, read N- to C-terminus: Beta-1,4-mannosyltransferase bre-3 (455 aa).

It belongs to the glycosyltransferase 2 family.

It localises to the cytoplasm. Its pathway is protein modification; protein glycosylation. Its function is as follows. Glycosyltransferase with a proposed role in glycosphingolipid biosynthesis. Involved in susceptibility to pore-forming crystal toxins in conjunction with bre-1, bre-2 and bre-4. Involved in resistance to the nematotoxic C.cinerea galectin Cgl2. Has a role in determining brood size. The protein is Beta-1,4-mannosyltransferase bre-3 of Caenorhabditis briggsae.